Consider the following 159-residue polypeptide: Mesogenin-1 (159 aa).

Residues Pro79–Ser101 are disordered. Over residues Lys86–Ala100 the composition is skewed to basic residues. The 55-residue stretch at Gln95–Leu149 folds into the bHLH domain.

The protein localises to the nucleus. In terms of biological role, involved in specifying the paraxial, but not dorsal, mesoderm. May regulate the expression of T-box transcription factors required for mesoderm formation and differentiation. The protein is Mesogenin-1 (MSGN1) of Gallus gallus (Chicken).